Reading from the N-terminus, the 321-residue chain is Lipoyl synthase (321 aa).

[4Fe-4S] cluster-binding residues include Cys68, Cys73, Cys79, Cys94, Cys98, Cys101, and Ser308. A Radical SAM core domain is found at 80 to 297 (FNHGTATFMI…KAEAMAMGFT (218 aa)).

Belongs to the radical SAM superfamily. Lipoyl synthase family. The cofactor is [4Fe-4S] cluster.

It localises to the cytoplasm. The catalysed reaction is [[Fe-S] cluster scaffold protein carrying a second [4Fe-4S](2+) cluster] + N(6)-octanoyl-L-lysyl-[protein] + 2 oxidized [2Fe-2S]-[ferredoxin] + 2 S-adenosyl-L-methionine + 4 H(+) = [[Fe-S] cluster scaffold protein] + N(6)-[(R)-dihydrolipoyl]-L-lysyl-[protein] + 4 Fe(3+) + 2 hydrogen sulfide + 2 5'-deoxyadenosine + 2 L-methionine + 2 reduced [2Fe-2S]-[ferredoxin]. The protein operates within protein modification; protein lipoylation via endogenous pathway; protein N(6)-(lipoyl)lysine from octanoyl-[acyl-carrier-protein]: step 2/2. In terms of biological role, catalyzes the radical-mediated insertion of two sulfur atoms into the C-6 and C-8 positions of the octanoyl moiety bound to the lipoyl domains of lipoate-dependent enzymes, thereby converting the octanoylated domains into lipoylated derivatives. In Pectobacterium atrosepticum (strain SCRI 1043 / ATCC BAA-672) (Erwinia carotovora subsp. atroseptica), this protein is Lipoyl synthase.